The chain runs to 557 residues: T-complex protein 1 subunit eta (557 aa).

Ala2 is modified (N-acetylalanine). Positions 529 to 557 (PKSESAQGDAAGAMGRGRGGGRGRGMRRR) are disordered. Over residues 547 to 557 (GGGRGRGMRRR) the composition is skewed to basic residues.

The protein belongs to the TCP-1 chaperonin family. Heterooligomeric complex of about 850 to 900 kDa that forms two stacked rings, 12 to 16 nm in diameter. Interacts with KNAT1.

It localises to the cytoplasm. Molecular chaperone; assists the folding of proteins upon ATP hydrolysis. Known to play a role, in vitro, in the folding of actin and tubulin. The protein is T-complex protein 1 subunit eta of Arabidopsis thaliana (Mouse-ear cress).